The primary structure comprises 191 residues: MVSVSQSAQNYFLNLLKKQKYGTNIRVYVKYPGTPVAKCGVSYCYKDDVTRLDVAFTMNKFIVYVYKPHIPYLRESKIDINVEECNSQLTLIAPYANKCYFIKNNDLKRRVENFLNLNINPQLSAHGGKVDLMNITESGYLSLKFSGGCNGCSMVQKTLKEGIEKQILAKFSEFKGVYDITQHNRGNHSYY.

Residues cysteine 149 and cysteine 152 each contribute to the [4Fe-4S] cluster site.

This sequence belongs to the NfuA family. Homodimer. The cofactor is [4Fe-4S] cluster.

Its function is as follows. Involved in iron-sulfur cluster biogenesis. Binds a 4Fe-4S cluster, can transfer this cluster to apoproteins, and thereby intervenes in the maturation of Fe/S proteins. Could also act as a scaffold/chaperone for damaged Fe/S proteins. The polypeptide is Fe/S biogenesis protein NfuA (Buchnera aphidicola subsp. Baizongia pistaciae (strain Bp)).